We begin with the raw amino-acid sequence, 378 residues long: Dual-specificity RNA methyltransferase RlmN (378 aa).

E96 (proton acceptor) is an active-site residue. Residues 102 to 340 (DNGRGTLCVS…ATVRTTRGDD (239 aa)) form the Radical SAM core domain. An intrachain disulfide couples C109 to C345. Positions 116, 120, and 123 each coordinate [4Fe-4S] cluster. S-adenosyl-L-methionine contacts are provided by residues 170–171 (GE), S202, 224–226 (SLH), and N302. C345 serves as the catalytic S-methylcysteine intermediate.

The protein belongs to the radical SAM superfamily. RlmN family. It depends on [4Fe-4S] cluster as a cofactor.

The protein localises to the cytoplasm. It carries out the reaction adenosine(2503) in 23S rRNA + 2 reduced [2Fe-2S]-[ferredoxin] + 2 S-adenosyl-L-methionine = 2-methyladenosine(2503) in 23S rRNA + 5'-deoxyadenosine + L-methionine + 2 oxidized [2Fe-2S]-[ferredoxin] + S-adenosyl-L-homocysteine. The enzyme catalyses adenosine(37) in tRNA + 2 reduced [2Fe-2S]-[ferredoxin] + 2 S-adenosyl-L-methionine = 2-methyladenosine(37) in tRNA + 5'-deoxyadenosine + L-methionine + 2 oxidized [2Fe-2S]-[ferredoxin] + S-adenosyl-L-homocysteine. Specifically methylates position 2 of adenine 2503 in 23S rRNA and position 2 of adenine 37 in tRNAs. m2A2503 modification seems to play a crucial role in the proofreading step occurring at the peptidyl transferase center and thus would serve to optimize ribosomal fidelity. In Hahella chejuensis (strain KCTC 2396), this protein is Dual-specificity RNA methyltransferase RlmN.